A 239-amino-acid polypeptide reads, in one-letter code: MKDRIFKQDIGKQFEFDAQVASVFDDMLERSIPHYKEVLGLIVDFCSYTLESSKSAIPLVYDLGSSTGTTLLALSQALSTHTRFIGIDSSQAMIDKASLKAQAYNANIEFICTDLLEYDFLHSDIVIANYSLQFIRPMQRPALLQKIYNALTEGGILIVSEKMTSHHRILDRQMIERYVRYKQEQGYTKTEISKKREALENVLVPFSLEENIAMLKDIGFSGIEVLFKWVNFGTLIAKK.

Residues Tyr-35, 64 to 66 (GSS), 114 to 115 (DL), Asn-129, and Arg-196 each bind S-adenosyl-L-methionine.

The protein belongs to the class I-like SAM-binding methyltransferase superfamily. Cx-SAM synthase family. As to quaternary structure, homodimer.

It catalyses the reaction prephenate + S-adenosyl-L-methionine = carboxy-S-adenosyl-L-methionine + 3-phenylpyruvate + H2O. Catalyzes the conversion of S-adenosyl-L-methionine (SAM) to carboxy-S-adenosyl-L-methionine (Cx-SAM). This chain is Carboxy-S-adenosyl-L-methionine synthase, found in Helicobacter hepaticus (strain ATCC 51449 / 3B1).